Here is a 230-residue protein sequence, read N- to C-terminus: Ribonuclease HII (230 aa).

The 192-residue stretch at 21 to 212 (GPVAGVDEVG…VRRVANGSGG (192 aa)) folds into the RNase H type-2 domain. Residues D27, E28, and D121 each coordinate a divalent metal cation.

It belongs to the RNase HII family. Mn(2+) is required as a cofactor. Mg(2+) serves as cofactor.

It localises to the cytoplasm. It carries out the reaction Endonucleolytic cleavage to 5'-phosphomonoester.. In terms of biological role, endonuclease that specifically degrades the RNA of RNA-DNA hybrids. The chain is Ribonuclease HII from Mycobacterium avium (strain 104).